Here is a 312-residue protein sequence, read N- to C-terminus: Type II methyltransferase M.NgoMIV (312 aa).

Residues phenylalanine 3–glutamate 311 form the SAM-dependent MTase C5-type domain. The active site involves cysteine 74.

It belongs to the class I-like SAM-binding methyltransferase superfamily. C5-methyltransferase family.

It catalyses the reaction a 2'-deoxycytidine in DNA + S-adenosyl-L-methionine = a 5-methyl-2'-deoxycytidine in DNA + S-adenosyl-L-homocysteine + H(+). Its function is as follows. A methylase, recognizes the double-stranded sequence 5'-GCCGGC-3', methylates C-2 on both strands, and protects the DNA from cleavage by the NgoMIV endonuclease. The chain is Type II methyltransferase M.NgoMIV (ngoMIVM) from Neisseria gonorrhoeae.